The sequence spans 230 residues: Ephrin-A3 (230 aa).

The N-terminal stretch at 1–22 (MAAAPLLLLLLLVPVPLLPLLA) is a signal peptide. Residues 30-161 (GNRHAVYWNS…RMKVFVCCAS (132 aa)) form the Ephrin RBD domain. Residues N38, N67, N84, and N92 are each glycosylated (N-linked (GlcNAc...) asparagine). Disulfide bonds link C63/C102 and C91/C150. G206 is lipidated: GPI-anchor amidated glycine. The propeptide at 207–230 (TSPKREHLPLAVGIAFFLMTLLAS) is removed in mature form.

The protein belongs to the ephrin family. Interacts with EPHA8; activates EPHA8. In terms of tissue distribution, expressed in myogenic progenitor cells.

The protein localises to the cell membrane. Functionally, cell surface GPI-bound ligand for Eph receptors, a family of receptor tyrosine kinases which are crucial for migration, repulsion and adhesion during neuronal, vascular and epithelial development. Binds promiscuously Eph receptors residing on adjacent cells, leading to contact-dependent bidirectional signaling into neighboring cells. The signaling pathway downstream of the receptor is referred to as forward signaling while the signaling pathway downstream of the ephrin ligand is referred to as reverse signaling. In Mus musculus (Mouse), this protein is Ephrin-A3 (Efna3).